Consider the following 622-residue polypeptide: MGARGNHTVDTSKQLAALRELMKKENVDVWVVPSEDQHYSEYLAHCDERRAFISGFNGSAGCAVITLDKAYLFTDGRYFLQAEKQLDSNWTLMKQGLPDVPTWQDFLHKTLDGSLKIGIDATIITEEDAAGLRKNLAPKKSELVPSKKNLVDIVWGSERPARPQNPVFHLDEKYSGQSFKEKVKKVREEIAKEKGKAFVVTMLDEVAWLFNLRGSDIDYNPVFFAYAVVTPDEVVLFINEKQLDDAARDYLGQDVKIRGYDELYDYLKELPKSLSLTGDKDGEKILVTSRTSLAITETITPPSSPESTTFHKVVRSPVGDLKAIKNAVEIEGFRQCHIRDGAALARYFAWLEEALNEGKEVSEYAGAEVLEKYRSELDLFRGLSFTTISSTGPNGAIIHYSPDPQDCAIIKKDQVYLCDSGAQFSDGTTDVTRTWHFGTPRPEEVRAFTRVLQGHIAIDTAVFPNGTTGYLIDSWARRSLWQDGLDYRHGTGHGVGHFLNVHEGPQGIGVRIAYNNTALKAGMTVSNEPGYYEDGQYGIRIENIVIVKEVKLPNNFGDKGYLGFEHVTMCPIQTKLIDASLLTEPEKKWVNDYHQEVWQKVSPLLQNDKRALEWLKRETTPI.

The Mn(2+) site is built by aspartate 419, aspartate 430, glutamate 528, and glutamate 542.

This sequence belongs to the peptidase M24B family. Mn(2+) is required as a cofactor.

The catalysed reaction is Release of any N-terminal amino acid, including proline, that is linked to proline, even from a dipeptide or tripeptide.. Functionally, catalyzes the removal of a penultimate prolyl residue from the N-termini of peptides. The chain is Probable Xaa-Pro aminopeptidase P (AMPP) from Coprinopsis cinerea (strain Okayama-7 / 130 / ATCC MYA-4618 / FGSC 9003) (Inky cap fungus).